A 181-amino-acid polypeptide reads, in one-letter code: Deoxyuridine 5'-triphosphate nucleotidohydrolase (181 aa).

Residues 96–98, Asn-109, 113–115, and Lys-123 each bind substrate; these read RSG and TVD.

This sequence belongs to the dUTPase family. The cofactor is Mg(2+).

The catalysed reaction is dUTP + H2O = dUMP + diphosphate + H(+). Its pathway is pyrimidine metabolism; dUMP biosynthesis; dUMP from dCTP (dUTP route): step 2/2. In terms of biological role, this enzyme is involved in nucleotide metabolism: it produces dUMP, the immediate precursor of thymidine nucleotides and it decreases the intracellular concentration of dUTP so that uracil cannot be incorporated into DNA. The protein is Deoxyuridine 5'-triphosphate nucleotidohydrolase of Corynebacterium efficiens (strain DSM 44549 / YS-314 / AJ 12310 / JCM 11189 / NBRC 100395).